The following is a 472-amino-acid chain: Putative ankyrin repeat protein L675 (472 aa).

ANK repeat units follow at residues 125 to 156, 187 to 216, 265 to 295, 297 to 323, 325 to 351, 352 to 381, 382 to 411, and 413 to 440; these read YKAN…DIHL, DNFK…NETI, YKTK…DKDI, HAML…NIHY, NDQA…GMDS, NNVF…DVNA, NNRS…DIKI, and DTVI…SCDD.

The polypeptide is Putative ankyrin repeat protein L675 (Acanthamoeba polyphaga (Amoeba)).